The primary structure comprises 309 residues: Coproporphyrin III ferrochelatase (309 aa).

Residues Tyr-12, Thr-14, Arg-29, 45–46 (RY), Ser-53, and Tyr-124 contribute to the Fe-coproporphyrin III site. Fe(2+)-binding residues include His-182 and Glu-263.

The protein belongs to the ferrochelatase family. In terms of assembly, monomer.

It localises to the cytoplasm. The catalysed reaction is Fe-coproporphyrin III + 2 H(+) = coproporphyrin III + Fe(2+). It participates in porphyrin-containing compound metabolism; protoheme biosynthesis. In terms of biological role, involved in coproporphyrin-dependent heme b biosynthesis. Catalyzes the insertion of ferrous iron into coproporphyrin III to form Fe-coproporphyrin III. In Listeria monocytogenes serovar 1/2a (strain ATCC BAA-679 / EGD-e), this protein is Coproporphyrin III ferrochelatase.